Here is a 226-residue protein sequence, read N- to C-terminus: ATP synthase subunit a (226 aa).

6 helical membrane-spanning segments follow: residues 18 to 38 (FITGFFVVLTAVLMFFISLGA), 79 to 99 (LAGTIALYVFFSNMIGIIPGF), 105 to 125 (SWSFTLVLALIVFFYYHFEGI), 134 to 154 (FAHFAGPVKWLAPFMFPIEII), 179 to 199 (LIMLLLVPWAVPVAPFMVLFF), and 201 to 221 (GILQAFVFMILTYVYLAGAVL).

Belongs to the ATPase A chain family. In terms of assembly, F-type ATPases have 2 components, CF(1) - the catalytic core - and CF(0) - the membrane proton channel. CF(1) has five subunits: alpha(3), beta(3), gamma(1), delta(1), epsilon(1). CF(0) has three main subunits: a(1), b(2) and c(9-12). The alpha and beta chains form an alternating ring which encloses part of the gamma chain. CF(1) is attached to CF(0) by a central stalk formed by the gamma and epsilon chains, while a peripheral stalk is formed by the delta and b chains.

The protein localises to the cell inner membrane. Its function is as follows. Key component of the proton channel; it plays a direct role in the translocation of protons across the membrane. This chain is ATP synthase subunit a, found in Helicobacter pylori (strain J99 / ATCC 700824) (Campylobacter pylori J99).